The chain runs to 292 residues: Probable 2-(5''-triphosphoribosyl)-3'-dephosphocoenzyme-A synthase (292 aa).

It belongs to the CitG/MdcB family.

It carries out the reaction 3'-dephospho-CoA + ATP = 2'-(5''-triphospho-alpha-D-ribosyl)-3'-dephospho-CoA + adenine. Its function is as follows. Involved in the formation of 2-(5''-phosphoribosyl)-3'-dephosphocoenzyme-A, the prosthetic group of the acyl-carrier protein of the malonate decarboxylase. The protein is Probable 2-(5''-triphosphoribosyl)-3'-dephosphocoenzyme-A synthase of Azotobacter vinelandii (strain DJ / ATCC BAA-1303).